Here is a 436-residue protein sequence, read N- to C-terminus: uncharacterized protein (436 aa).

The signal sequence occupies residues 1–20 (MKCAVAILLVCLTLQQAAYG). Coiled-coil stretches lie at residues 25 to 87 (EEVK…ALRN), 154 to 207 (MRKT…NSVE), and 247 to 329 (ESWG…ASLL). Positions 371 to 390 (EEEIAPSTEEDGSEELEADS) are enriched in acidic residues. Residues 371 to 419 (EEEIAPSTEEDGSEELEADSYDSKVGGESPISQRTEERQGAEERSRLRR) form a disordered region. Basic and acidic residues predominate over residues 404 to 415 (RTEERQGAEERS).

As to expression, component of the acid-insoluble organic matrix of the aragonitic skeleton (at protein level).

It localises to the secreted. This is an uncharacterized protein from Acropora millepora (Staghorn coral).